We begin with the raw amino-acid sequence, 1674 residues long: Maestro heat-like repeat-containing protein family member 2A (1674 aa).

The interval 1-26 is disordered; that stretch reads MTEAITEAAVASSEEVSEERDDLGPL. HEAT repeat units follow at residues 73–96, 97–133, 195–234, 254–292, 382–419, 424–461, 573–612, 615–641, 642–679, 739–776, 993–1030, 1221–1263, 1381–1420, and 1627–1674; these read ATTEPSVVINTLIRCLQVPEISTQ, RKVNIYNILQDIIQQEGELEEQCVQRLVAIASKEMRE, MPYMGITLATIFTMLRLANEAKIRQAICSAMETFCETVQF, LKVFPMYRYFVTVWLRHYNPEVKLGVIKSLKPMLGLLLP, SYPKELMKFFFSQMETNKEAVRVGTLNLIRAIVSADEP, RAIYLAIRVVKNTISDTRSKVRMAILHIIGQLALCGYQ, PAPQKLLARLLVLMSSPYKGEGRGIAMLNLLRTLSQSIAP, ADMWELEIALLVRYLEEHTEFTWDQKA, WEDKLIQFLRNSLKKTRGSSWSLRLSKELNNQIASFDS, KTVLNVLHDFEERIQESEQSWQISAWRKDHPWRRETVK, GQFGTMVGLIAPCTCDAHQRTRMASMNVLSSLLDLHAS, DPLM…SHRP, EKLLKPAALLLEKGADQEEDEALRVLSLRALGNMALGAPK, and LDFP…QGMS.

The polypeptide is Maestro heat-like repeat-containing protein family member 2A (MROH2A) (Homo sapiens (Human)).